The chain runs to 193 residues: Acyl carrier protein phosphodiesterase (193 aa).

The protein belongs to the AcpH family.

It carries out the reaction holo-[ACP] + H2O = apo-[ACP] + (R)-4'-phosphopantetheine + H(+). Functionally, converts holo-ACP to apo-ACP by hydrolytic cleavage of the phosphopantetheine prosthetic group from ACP. This is Acyl carrier protein phosphodiesterase from Serratia proteamaculans (strain 568).